A 1651-amino-acid chain; its full sequence is A.superbus venom factor 2 (1651 aa).

The first 22 residues, 1–22 (MEGMALYLVAALLIGFPGSSHG), serve as a signal peptide directing secretion. N-linked (GlcNAc...) asparagine glycosylation occurs at asparagine 189. Residues proline 519, aspartate 542, valine 543, and aspartate 545 each contribute to the Mg(2+) site. 12 disulfide bridges follow: cysteine 547-cysteine 808, cysteine 616-cysteine 651, cysteine 684-cysteine 711, cysteine 685-cysteine 718, cysteine 698-cysteine 719, cysteine 864-cysteine 1501, cysteine 1346-cysteine 1477, cysteine 1377-cysteine 1446, cysteine 1494-cysteine 1499, cysteine 1506-cysteine 1578, cysteine 1525-cysteine 1649, and cysteine 1625-cysteine 1634. A propeptide spanning residues 657 to 739 (RRRRSSVLLL…QRESELFLAR (83 aa)) is cleaved from the precursor. The segment at 661–739 (SSVLLLDSKA…QRESELFLAR (79 aa)) is C3a-like domain. The Anaphylatoxin-like domain occupies 684-719 (CCEDGMHENPMGYTCEKRAKYTQEGDACKAAFLECC). The interval 743 to 754 (EDEFFEEDNIIS) is factor B binding site. A propeptide spanning residues 992–1269 (HLIITPSGSG…VMVFQALAEY (278 aa)) is cleaved from the precursor. Residues 992 to 1269 (HLIITPSGSG…VMVFQALAEY (278 aa)) form a C3d-like domain region. Residues 1197–1259 (VLMAASTGRD…GGTYGQTQAT (63 aa)) form a factor H binding site region. N-linked (GlcNAc...) asparagine glycosylation is found at asparagine 1282 and asparagine 1352. Residues 1506–1649 (CSLLNQQKKI…LSNTLTIFGC (144 aa)) enclose the NTR domain.

It belongs to the venom complement C3 homolog family. As to quaternary structure, heterotrimer of alpha, beta and gamma chains; disulfide-linked. Is active with factor B in the presence of factor D. First processed by the removal of 4 Arg residues by furin-type protease, forming two chains, alpha and gamma/beta precursor, linked by a disulfide bond. This mature AVF is composed of three chains: alpha, gamma and beta. Expressed by the venom gland.

It localises to the secreted. Functionally, complement-activating protein in snake venom. It is a structural and functional analog of complement component C3b, the activated form of C3. It binds factor B (CFB), which is subsequently cleaved by factor D (CFD) to form the bimolecular complex AVF/Bb. AVF/Bb is a C3 convertase that cleaves complement component C3, but not C5 (as do CVF/Bb). This chain is A.superbus venom factor 2, found in Austrelaps superbus (Lowland copperhead snake).